The primary structure comprises 356 residues: NADH-quinone oxidoreductase subunit H (356 aa).

Transmembrane regions (helical) follow at residues 18-38 (IVMV…IAYI), 87-107 (GVFL…WAVI), 120-140 (VGIL…IMGG), 166-186 (IGFV…SAIV), 202-222 (WLTF…VFYV), 257-277 (LFML…AILF), 292-312 (WVPG…LIAM), and 333-353 (FLPL…FAGI).

Belongs to the complex I subunit 1 family. As to quaternary structure, NDH-1 is composed of 14 different subunits. Subunits NuoA, H, J, K, L, M, N constitute the membrane sector of the complex.

The protein resides in the cell inner membrane. It carries out the reaction a quinone + NADH + 5 H(+)(in) = a quinol + NAD(+) + 4 H(+)(out). Its function is as follows. NDH-1 shuttles electrons from NADH, via FMN and iron-sulfur (Fe-S) centers, to quinones in the respiratory chain. The immediate electron acceptor for the enzyme in this species is believed to be ubiquinone. Couples the redox reaction to proton translocation (for every two electrons transferred, four hydrogen ions are translocated across the cytoplasmic membrane), and thus conserves the redox energy in a proton gradient. This subunit may bind ubiquinone. This Nitrobacter winogradskyi (strain ATCC 25391 / DSM 10237 / CIP 104748 / NCIMB 11846 / Nb-255) protein is NADH-quinone oxidoreductase subunit H.